A 292-amino-acid chain; its full sequence is GTP cyclohydrolase FolE2 (292 aa).

It belongs to the GTP cyclohydrolase IV family.

It catalyses the reaction GTP + H2O = 7,8-dihydroneopterin 3'-triphosphate + formate + H(+). The protein operates within cofactor biosynthesis; 7,8-dihydroneopterin triphosphate biosynthesis; 7,8-dihydroneopterin triphosphate from GTP: step 1/1. Its function is as follows. Converts GTP to 7,8-dihydroneopterin triphosphate. The sequence is that of GTP cyclohydrolase FolE2 from Staphylococcus aureus (strain Mu50 / ATCC 700699).